The sequence spans 174 residues: MGKITFYEDRGFQGRHYECSSDHSNLQPYLGRCNSVRVDSGCWMIYEQPNYLGPQYFLRRGDYPDYQQWMGLNDSVRSCRLIPHAGSHRLRLYEREDYRGQMIEITEDCSSLQDRFHFNEIHSLNVLEGSWVLYELPNYRGRQYLLRPGEYRRYHDWGAMNAKVGSLRRVIDIY.

Beta/gamma crystallin 'Greek key' domains follow at residues 2-40 (GKIT…RVDS) and 41-83 (GCWM…RLIP). The interval 84–87 (HAGS) is connecting peptide. 2 Beta/gamma crystallin 'Greek key' domains span residues 88–128 (HRLR…NVLE) and 129–171 (GSWV…RRVI).

The protein belongs to the beta/gamma-crystallin family.

Functionally, crystallins are the dominant structural components of the vertebrate eye lens. The sequence is that of Gamma-crystallin D (CRYGD) from Bos taurus (Bovine).